The chain runs to 228 residues: Geranylgeranylglyceryl phosphate synthase (228 aa).

Lys13 serves as a coordination point for sn-glycerol 1-phosphate. Mg(2+) contacts are provided by Asp15 and Thr41. Residues 159 to 164, Gly189, and 209 to 210 each bind sn-glycerol 1-phosphate; these read YIEYSG and GN.

Belongs to the GGGP/HepGP synthase family. Group I subfamily. Requires Mg(2+) as cofactor.

Its subcellular location is the cytoplasm. The catalysed reaction is sn-glycerol 1-phosphate + (2E,6E,10E)-geranylgeranyl diphosphate = sn-3-O-(geranylgeranyl)glycerol 1-phosphate + diphosphate. It participates in membrane lipid metabolism; glycerophospholipid metabolism. Prenyltransferase that catalyzes the transfer of the geranylgeranyl moiety of geranylgeranyl diphosphate (GGPP) to the C3 hydroxyl of sn-glycerol-1-phosphate (G1P). This reaction is the first ether-bond-formation step in the biosynthesis of archaeal membrane lipids. The protein is Geranylgeranylglyceryl phosphate synthase of Methanospirillum hungatei JF-1 (strain ATCC 27890 / DSM 864 / NBRC 100397 / JF-1).